An 85-amino-acid polypeptide reads, in one-letter code: MASQLIIYSAHVVLLVLVWLLAYTEVVPVLSYIPECAHCLVYYIYAAFNVIYGVATFNDCAEAKVELLQEIKQARAELKQKRIID.

Transmembrane regions (helical) follow at residues 13–33 (VLLVLVWLLAYTEVVPVLSYI) and 37–57 (AHCLVYYIYAAFNVIYGVATF).

The protein belongs to the DPM3 family.

The protein localises to the endoplasmic reticulum membrane. It participates in protein modification; protein glycosylation. Its function is as follows. Stabilizer subunit of the dolichol-phosphate-mannose synthase complex. The polypeptide is Probable dolichol-phosphate mannosyltransferase subunit 3 (Caenorhabditis briggsae).